Here is a 327-residue protein sequence, read N- to C-terminus: Vacuolar protein sorting-associated protein 26A (327 aa).

Positions 306-327 are disordered; sequence RTNFHQRFESPDSQASAEQPEM. A Phosphoserine modification is found at S315. Residues 316-327 show a composition bias toward polar residues; it reads PDSQASAEQPEM.

This sequence belongs to the VPS26 family. As to quaternary structure, component of the heterotrimeric retromer cargo-selective complex (CSC), also described as vacuolar protein sorting subcomplex (VPS), formed by VPS26 (VPS26A or VPS26B), VPS29 and VPS35. The CSC has a highly elongated structure with VPS26 and VPS29 binding independently at opposite distal ends of VPS35 as central platform. The CSC is believed to associate with variable sorting nexins to form functionally distinct retromer complex variants. The originally described retromer complex (also called SNX-BAR retromer) is a pentamer containing the CSC and a heterodimeric membrane-deforming subcomplex formed between SNX1 or SNX2 and SNX5 or SNX6 (also called SNX-BAR subcomplex); the respective CSC and SNX-BAR subcomplexes associate with low affinity. The CSC associates with SNX3 to form a SNX3-retromer complex. The CSC associates with SNX27, the WASH complex and the SNX-BAR subcomplex to form the SNX27-retromer complex. Interacts with VPS29, VPS35, SNX27. Interacts with SNX1, SNX2, SNX5, SNX6, SNX3, RAB7A, ECPAS, EHD1, WASHC5, SORL1.

Its subcellular location is the cytoplasm. It is found in the endosome membrane. The protein resides in the early endosome. Its function is as follows. Acts as a component of the retromer cargo-selective complex (CSC). The CSC is believed to be the core functional component of retromer or respective retromer complex variants acting to prevent missorting of selected transmembrane cargo proteins into the lysosomal degradation pathway. The recruitment of the CSC to the endosomal membrane involves RAB7A and SNX3. The SNX-BAR retromer mediates retrograde transport of cargo proteins from endosomes to the trans-Golgi network (TGN) and is involved in endosome-to-plasma membrane transport for cargo protein recycling. The SNX3-retromer mediates the retrograde endosome-to-TGN transport of WLS distinct from the SNX-BAR retromer pathway. The SNX27-retromer is believed to be involved in endosome-to-plasma membrane trafficking and recycling of a broad spectrum of cargo proteins. The CSC complex seems to act as recruitment hub for other proteins, such as the WASH complex and TBC1D5. Required for retrograde transport of lysosomal enzyme receptor IGF2R. Required to regulate transcytosis of the polymeric immunoglobulin receptor (pIgR-pIgA). Required for the endosomal localization of WASHC2 (indicative for the WASH complex). Required for the endosomal localization of TBC1D5. Mediates retromer cargo recognition of SORL1 and is involved in trafficking of SORL1 implicated in sorting and processing of APP. Involved in retromer-independent lysosomal sorting of F2R. Involved in recycling of ADRB2. Acts redundantly with VSP26B in SNX-27 mediated endocytic recycling of SLC2A1/GLUT1. Enhances the affinity of SNX27 for PDZ-binding motifs in cargo proteins. This Mus musculus (Mouse) protein is Vacuolar protein sorting-associated protein 26A (Vps26a).